Here is a 211-residue protein sequence, read N- to C-terminus: SAGA-associated factor 11 homolog 1 (211 aa).

An SGF11-type zinc finger spans residues 115–136 (CTCPNCDRLVAAARFAPHLEKC). Residues 149 to 211 (RRLATKEGSS…GSKKNNGKTF (63 aa)) are disordered. Residues 157 to 166 (SSASTSSTST) show a composition bias toward low complexity. Phosphoserine is present on Ser-187. Residues 197 to 211 (SSRNNGSKKNNGKTF) are compositionally biased toward low complexity.

Belongs to the SGF11 family. As to quaternary structure, component of some SAGA transcription coactivator-HAT complexes, at least composed of Ada2b, not/nonstop, Pcaf/Gcn5, Sgf11 and Spt3. Within the SAGA complex, Sgf11, e(y)2, and not/nonstop form an additional subcomplex of SAGA called the DUB module (deubiquitination module). Interacts directly with not/nonstop. Interacts with the AMEX complex component xmas-2. Interacts with Cbp80; important for promoter recruitment of Sgf11 that is not associated with the DUB module.

It is found in the nucleus. The protein localises to the nucleoplasm. The protein resides in the cytoplasm. In terms of biological role, component of the transcription regulatory histone acetylation (HAT) complex SAGA, a multiprotein complex that activates transcription by remodeling chromatin and mediating histone acetylation and deubiquitination. Within the SAGA complex, participates in a subcomplex that specifically deubiquitinates histone H2B. The SAGA complex is recruited to specific gene promoters by activators, where it is required for transcription. Required for nuclear receptor-mediated transactivation. Binds independently on SAGA to promoters in an RNA-dependent manner. Binds to mRNA and is essential for total mRNA export from the nucleus. Required to counteract heterochromatin silencing. Controls the development of neuronal connectivity in visual system by being required for accurate axon targeting in the optic lobe. Required for expression of ecdysone-induced genes such as br/broad. In Drosophila grimshawi (Hawaiian fruit fly), this protein is SAGA-associated factor 11 homolog 1.